Consider the following 710-residue polypeptide: MQGKKPGGSSGGGRSGELQGDEAQRNKKKKKKVSCFSNIKIFLVSECALMLAQGTVGAYLVSVLTTLERRFNLQSADVGVIASSFEIGNLALILFVSYFGARGHRPRLIGCGGIVMALGALLSALPEFLTHQYKYEAGEIRWGAEGRDVCATNGSSSDEGPDPDLICRNRTATNMMYLLLIGAQVLLGIGATPVQPLGVSYIDDHVRRKDSSLYIGILFTMLVFGPACGFILGSFCTKIYVDAVFIDTSNLDITPDDPRWIGAWWGGFLLCGALLFFSSLLMFGFPQSLPPHSDPGMESEQAMLPEREYERPKPSNGVLRHPLEPDSSASCFQQLRVIPKVTKHLLSNPVFTCIVLAACMEIAVVAGFAAFLGKYLEQQFNLTTSSANQLLGMTAIPCACLGIFLGGLLVKKLSLSALGAIRMAMLVNLVSTACYVSFLFLGCDTGPVAGVTVRYGNNSARGSALDPYSPCNNNCECQTDSFTPVCGADGITYLSACFAGCNSTNLTGCACLTTVPPENASVVPGKCPSPGCQEAFLTFLCVMCVCSLIGAMAQTPSVIILIRTVSPELKSYALGVLFLLLRLLGFIPPPLIFGAGIDSTCLFWSTFCGEQGACVLYDNVVYRYLYVSIAIALKSFAFILYTTTWQCLRKNYKRYIKNHEGGLSTSEFFASTLTLDNLGRDPVPAHQTHRTKFIYNLEDHEWCENMESVL.

Met-1 carries the post-translational modification N-acetylmethionine. Gly residues predominate over residues 1–15 (MQGKKPGGSSGGGRS). The tract at residues 1-25 (MQGKKPGGSSGGGRSGELQGDEAQR) is disordered. Topologically, residues 1–40 (MQGKKPGGSSGGGRSGELQGDEAQRNKKKKKKVSCFSNIK) are cytoplasmic. Residues 41 to 60 (IFLVSECALMLAQGTVGAYL) form a helical membrane-spanning segment. The Extracellular segment spans residues 61–79 (VSVLTTLERRFNLQSADVG). Residues 80–100 (VIASSFEIGNLALILFVSYFG) traverse the membrane as a helical segment. Residues 101–106 (ARGHRP) lie on the Cytoplasmic side of the membrane. The helical transmembrane segment at 107 to 131 (RLIGCGGIVMALGALLSALPEFLTH) threads the bilayer. Residues 132-174 (QYKYEAGEIRWGAEGRDVCATNGSSSDEGPDPDLICRNRTATN) lie on the Extracellular side of the membrane. N-linked (GlcNAc...) asparagine glycosylation is found at Asn-153 and Asn-169. The chain crosses the membrane as a helical span at residues 175–203 (MMYLLLIGAQVLLGIGATPVQPLGVSYID). Residues 204–222 (DHVRRKDSSLYIGILFTML) lie on the Cytoplasmic side of the membrane. A helical transmembrane segment spans residues 223–243 (VFGPACGFILGSFCTKIYVDA). The Extracellular portion of the chain corresponds to 244–261 (VFIDTSNLDITPDDPRWI). A helical membrane pass occupies residues 262–286 (GAWWGGFLLCGALLFFSSLLMFGFP). The Cytoplasmic segment spans residues 287-344 (QSLPPHSDPGMESEQAMLPEREYERPKPSNGVLRHPLEPDSSASCFQQLRVIPKVTKH). Residues 345 to 366 (LLSNPVFTCIVLAACMEIAVVA) form a helical membrane-spanning segment. Topologically, residues 367–386 (GFAAFLGKYLEQQFNLTTSS) are extracellular. A glycan (N-linked (GlcNAc...) asparagine) is linked at Asn-381. Residues 387 to 410 (ANQLLGMTAIPCACLGIFLGGLLV) traverse the membrane as a helical segment. Over 411–414 (KKLS) the chain is Cytoplasmic. The chain crosses the membrane as a helical span at residues 415–438 (LSALGAIRMAMLVNLVSTACYVSF). Residues 439 to 539 (LFLGCDTGPV…PGCQEAFLTF (101 aa)) are Extracellular-facing. Asn-457 is a glycosylation site (N-linked (GlcNAc...) asparagine). One can recognise a Kazal-like domain in the interval 465 to 513 (LDPYSPCNNNCECQTDSFTPVCGADGITYLSACFAGCNSTNLTGCACLT). 3 disulfide bridges follow: Cys-471–Cys-497, Cys-475–Cys-486, and Cys-477–Cys-501. Residues Asn-502, Asn-505, and Asn-519 are each glycosylated (N-linked (GlcNAc...) asparagine). A helical membrane pass occupies residues 540 to 562 (LCVMCVCSLIGAMAQTPSVIILI). Residues 563–571 (RTVSPELKS) lie on the Cytoplasmic side of the membrane. A helical membrane pass occupies residues 572–597 (YALGVLFLLLRLLGFIPPPLIFGAGI). Topologically, residues 598-630 (DSTCLFWSTFCGEQGACVLYDNVVYRYLYVSIA) are extracellular. A helical membrane pass occupies residues 631–648 (IALKSFAFILYTTTWQCL). Topologically, residues 649 to 705 (RKNYKRYIKNHEGGLSTSEFFASTLTLDNLGRDPVPAHQTHRTKFIYNLEDHEWCEN) are cytoplasmic.

This sequence belongs to the organo anion transporter (TC 2.A.60) family. In terms of tissue distribution, widely expressed.

It localises to the basolateral cell membrane. The protein localises to the apical cell membrane. The protein resides in the basal cell membrane. The catalysed reaction is L-thyroxine(out) = L-thyroxine(in). The enzyme catalyses prostaglandin E1(out) = prostaglandin E1(in). It carries out the reaction prostaglandin E2(out) = prostaglandin E2(in). It catalyses the reaction prostaglandin F2alpha(out) = prostaglandin F2alpha(in). The catalysed reaction is (5Z,8Z,11Z,14Z)-eicosatetraenoate(out) = (5Z,8Z,11Z,14Z)-eicosatetraenoate(in). The enzyme catalyses taurocholate(out) = taurocholate(in). It carries out the reaction glycocholate(out) = glycocholate(in). It catalyses the reaction estrone 3-sulfate(out) = estrone 3-sulfate(in). The catalysed reaction is argipressin(out) = argipressin(in). Putative organic anion antiporter with apparent broad substrate specificity. Recognizes various substrates including thyroid hormone L-thyroxine, prostanoids such as prostaglandin E1 and E2, bile acids such as taurocholate, glycolate and glycochenodeoxycholate and peptide hormones such as L-arginine vasopressin, likely operating in a tissue-specific manner. The transport mechanism, its electrogenicity and potential tissue-specific counterions remain to be elucidated. This is Solute carrier organic anion transporter family member 3A1 (Slco3a1) from Mus musculus (Mouse).